The following is a 482-amino-acid chain: tRNA sulfurtransferase (482 aa).

The region spanning 61–165 (LAIRDALTRI…DDRLLLIKGR (105 aa)) is the THUMP domain. Residues 183 to 184 (LI), K265, G287, and Q296 each bind ATP. An intrachain disulfide couples C344 to C456. Positions 404 to 482 (FGANDVILDI…GFANVKVYRP (79 aa)) constitute a Rhodanese domain. The Cysteine persulfide intermediate role is filled by C456.

This sequence belongs to the ThiI family.

It is found in the cytoplasm. It carries out the reaction [ThiI sulfur-carrier protein]-S-sulfanyl-L-cysteine + a uridine in tRNA + 2 reduced [2Fe-2S]-[ferredoxin] + ATP + H(+) = [ThiI sulfur-carrier protein]-L-cysteine + a 4-thiouridine in tRNA + 2 oxidized [2Fe-2S]-[ferredoxin] + AMP + diphosphate. It catalyses the reaction [ThiS sulfur-carrier protein]-C-terminal Gly-Gly-AMP + S-sulfanyl-L-cysteinyl-[cysteine desulfurase] + AH2 = [ThiS sulfur-carrier protein]-C-terminal-Gly-aminoethanethioate + L-cysteinyl-[cysteine desulfurase] + A + AMP + 2 H(+). It functions in the pathway cofactor biosynthesis; thiamine diphosphate biosynthesis. In terms of biological role, catalyzes the ATP-dependent transfer of a sulfur to tRNA to produce 4-thiouridine in position 8 of tRNAs, which functions as a near-UV photosensor. Also catalyzes the transfer of sulfur to the sulfur carrier protein ThiS, forming ThiS-thiocarboxylate. This is a step in the synthesis of thiazole, in the thiamine biosynthesis pathway. The sulfur is donated as persulfide by IscS. This chain is tRNA sulfurtransferase, found in Salmonella paratyphi B (strain ATCC BAA-1250 / SPB7).